Reading from the N-terminus, the 195-residue chain is Probable GTP-binding protein EngB (195 aa).

The region spanning 22-195 is the EngB-type G domain; sequence GLPEIALAGR…WGAIKKMINR (174 aa). Residues 30–37, 57–61, 75–78, 142–145, and 174–176 each bind GTP; these read GRSNVGKS, GKTQT, DVPG, TKAD, and FSS. The Mg(2+) site is built by Ser-37 and Thr-59.

Belongs to the TRAFAC class TrmE-Era-EngA-EngB-Septin-like GTPase superfamily. EngB GTPase family. It depends on Mg(2+) as a cofactor.

Functionally, necessary for normal cell division and for the maintenance of normal septation. Its function is as follows. Binds GTP and GDP. The chain is Probable GTP-binding protein EngB from Bacillus subtilis (strain 168).